Reading from the N-terminus, the 107-residue chain is Small ribosomal subunit protein uS10c (107 aa).

This sequence belongs to the universal ribosomal protein uS10 family. In terms of assembly, part of the 30S ribosomal subunit.

The protein resides in the plastid. Its subcellular location is the chloroplast. In terms of biological role, involved in the binding of tRNA to the ribosomes. This Phaeodactylum tricornutum (strain CCAP 1055/1) protein is Small ribosomal subunit protein uS10c.